The following is a 143-amino-acid chain: MSGRGKTGGKARAKAKSRSSRAGLQFPVGRVHRLLRKGHYAERVGAGAPVYLAAVLEYLTAEILELAGNAARDNKKTRIIPRHLQLAIRNDEELNKLLGGVTIAQGGVLPNIQAVLLPKKTSATVGPKAPSGGKKATQASQEY.

Residues 1–22 form a disordered region; the sequence is MSGRGKTGGKARAKAKSRSSRA. Serine 2 carries the N-acetylserine modification. Serine 2 carries the phosphoserine modification. 2 positions are modified to N6-acetyllysine: lysine 6 and lysine 10. A compositionally biased stretch (basic residues) spans 7-19; the sequence is TGGKARAKAKSRS. N6-lactoyllysine; alternate is present on lysine 10. Glycyl lysine isopeptide (Lys-Gly) (interchain with G-Cter in ubiquitin) cross-links involve residues lysine 14 and lysine 16. Residue lysine 37 is modified to N6-acetyllysine. Lysine 120 is covalently cross-linked (Glycyl lysine isopeptide (Lys-Gly) (interchain with G-Cter in ubiquitin)). The disordered stretch occupies residues 121-143; the sequence is TSATVGPKAPSGGKKATQASQEY. Position 122 is a phosphoserine (serine 122). Glycyl lysine isopeptide (Lys-Gly) (interchain with G-Cter in SUMO2) cross-links involve residues lysine 128 and lysine 135. Phosphoserine; by ATM, ATR and PRKDC is present on serine 140. Positions 140-141 match the [ST]-Q motif motif; it reads SQ. Position 143 is a phosphotyrosine; by WSTF (tyrosine 143).

This sequence belongs to the histone H2A family. In terms of assembly, the nucleosome is a histone octamer containing two molecules each of H2A, H2B, H3 and H4 assembled in one H3-H4 heterotetramer and two H2A-H2B heterodimers. The octamer wraps approximately 147 bp of DNA. Interacts with numerous proteins required for DNA damage signaling and repair when phosphorylated on Ser-140. These include MDC1, TP53BP1, BRCA1 and the MRN complex, composed of MRE11, RAD50, and NBN. Interaction with the MRN complex is mediated at least in part by NBN. Also interacts with DHX9/NDHII when phosphorylated on Ser-140 and MCPH1 when phosphorylated at Ser-140 or Tyr-143. Interacts with ARRB2; the interaction is detected in the nucleus upon OR1D2 stimulation. Interacts with WRAP53/TCAB1. Interacts with HDGFL2. Interacts with DNA damage up-regulated protein DDUP. Forms a complex with DDUP and RAD18 following DDUP phosphorylation. (Microbial infection) Interacts with Epstein-Barr virus protein EBNA6. Phosphorylated by VRK1. Phosphorylated on Ser-140 (to form gamma-H2AX or H2AX139ph) in response to DNA double strand breaks (DSBs) generated by exogenous genotoxic agents and by stalled replication forks, and may also occur during meiotic recombination events and immunoglobulin class switching in lymphocytes. Phosphorylation can extend up to several thousand nucleosomes from the actual site of the DSB and may mark the surrounding chromatin for recruitment of proteins required for DNA damage signaling and repair. Widespread phosphorylation may also serve to amplify the damage signal or aid repair of persistent lesions. Phosphorylation of Ser-140 (H2AX139ph) in response to ionizing radiation is mediated by both ATM and PRKDC while defects in DNA replication induce Ser-140 phosphorylation (H2AX139ph) subsequent to activation of ATR and PRKDC. Dephosphorylation of Ser-140 by PP2A is required for DNA DSB repair. In meiosis, Ser-140 phosphorylation (H2AX139ph) may occur at synaptonemal complexes during leptotene as an ATM-dependent response to the formation of programmed DSBs by SPO11. Ser-140 phosphorylation (H2AX139ph) may subsequently occurs at unsynapsed regions of both autosomes and the XY bivalent during zygotene, downstream of ATR and BRCA1 activation. Ser-140 phosphorylation (H2AX139ph) may also be required for transcriptional repression of unsynapsed chromatin and meiotic sex chromosome inactivation (MSCI), whereby the X and Y chromosomes condense in pachytene to form the heterochromatic XY-body. During immunoglobulin class switch recombination in lymphocytes, Ser-140 phosphorylation (H2AX139ph) may occur at sites of DNA-recombination subsequent to activation of the activation-induced cytidine deaminase AICDA. Phosphorylation at Tyr-143 (H2AXY142ph) by BAZ1B/WSTF determines the relative recruitment of either DNA repair or pro-apoptotic factors. Phosphorylation at Tyr-143 (H2AXY142ph) favors the recruitment of APBB1/FE65 and pro-apoptosis factors such as MAPK8/JNK1, triggering apoptosis. In contrast, dephosphorylation of Tyr-143 by EYA proteins (EYA1, EYA2, EYA3 or EYA4) favors the recruitment of MDC1-containing DNA repair complexes to the tail of phosphorylated Ser-140 (H2AX139ph). In terms of processing, monoubiquitination of Lys-120 (H2AXK119ub) by RING1 and RNF2/RING2 complex gives a specific tag for epigenetic transcriptional repression. Following DNA double-strand breaks (DSBs), it is ubiquitinated through 'Lys-63' linkage of ubiquitin moieties by the E2 ligase UBE2N and the E3 ligases RNF8 and RNF168, leading to the recruitment of repair proteins to sites of DNA damage. Ubiquitination at Lys-14 and Lys-16 (H2AK13Ub and H2AK15Ub, respectively) in response to DNA damage is initiated by RNF168 that mediates monoubiquitination at these 2 sites, and 'Lys-63'-linked ubiquitin are then conjugated to monoubiquitin; RNF8 is able to extend 'Lys-63'-linked ubiquitin chains in vitro. H2AK119Ub and ionizing radiation-induced 'Lys-63'-linked ubiquitination (H2AK13Ub and H2AK15Ub) are distinct events. Post-translationally, acetylation at Lys-6 (H2AXK5ac) by KAT5 component of the NuA4 histone acetyltransferase complex promotes NBN/NBS1 assembly at the sites of DNA damage. Acetylation at Lys-37 increases in S and G2 phases. This modification has been proposed to play a role in DNA double-strand break repair.

It is found in the nucleus. Its subcellular location is the chromosome. Variant histone H2A which replaces conventional H2A in a subset of nucleosomes. Nucleosomes wrap and compact DNA into chromatin, limiting DNA accessibility to the cellular machineries which require DNA as a template. Histones thereby play a central role in transcription regulation, DNA repair, DNA replication and chromosomal stability. DNA accessibility is regulated via a complex set of post-translational modifications of histones, also called histone code, and nucleosome remodeling. Required for checkpoint-mediated arrest of cell cycle progression in response to low doses of ionizing radiation and for efficient repair of DNA double strand breaks (DSBs) specifically when modified by C-terminal phosphorylation. The polypeptide is Histone H2AX (Homo sapiens (Human)).